The sequence spans 458 residues: N-acetylgalactosamine kinase (458 aa).

R43, E49, H50, and D52 together coordinate alpha-D-galactose. 3 residues coordinate ATP: G143, S145, and S146. D190 contacts alpha-D-galactose. D190 functions as the Proton acceptor in the catalytic mechanism. ATP is bound by residues N233 and K234.

It belongs to the GHMP kinase family. GalK subfamily. As to quaternary structure, monomer.

The enzyme catalyses N-acetyl-alpha-D-galactosamine + ATP = N-acetyl-alpha-D-galactosamine 1-phosphate + ADP + H(+). Its function is as follows. Acts on GalNAc. Also acts as a galactokinase when galactose is present at high concentrations. This is N-acetylgalactosamine kinase (Galk2) from Mus musculus (Mouse).